The sequence spans 215 residues: Cytidylate kinase (215 aa).

Residue 11–19 (GPTASGKGT) coordinates ATP.

Belongs to the cytidylate kinase family. Type 1 subfamily.

It is found in the cytoplasm. It catalyses the reaction CMP + ATP = CDP + ADP. The enzyme catalyses dCMP + ATP = dCDP + ADP. This Polynucleobacter necessarius subsp. necessarius (strain STIR1) protein is Cytidylate kinase.